The sequence spans 469 residues: Neuraminidase (469 aa).

Topologically, residues 1-9 (MNPNQKIIT) are intravirion. A helical membrane pass occupies residues 10-30 (IGSVSLTIATVCFLMQIAILV). The interval 11-33 (GSVSLTIATVCFLMQIAILVTTV) is involved in apical transport and lipid raft association. The Virion surface segment spans residues 31–469 (TTVTLHFKQY…DGADINLMPI (439 aa)). A hypervariable stalk region region spans residues 36–88 (HFKQYECDSPANNQVMPCEPIIIERNITEIVYLTNTTIEKEICPKLVEYRNWS). N-linked (GlcNAc...) asparagine; by host glycosylation is found at Asn-61, Asn-70, and Asn-86. Residues 91 to 469 (QCKITGFAPF…DGADINLMPI (379 aa)) are head of neuraminidase. Disulfide bonds link Cys-92-Cys-417, Cys-124-Cys-129, Cys-183-Cys-230, Cys-232-Cys-237, Cys-278-Cys-291, Cys-280-Cys-289, Cys-318-Cys-337, and Cys-421-Cys-447. Arg-118 is a substrate binding site. N-linked (GlcNAc...) asparagine; by host glycosylation is present at Asn-146. The active-site Proton donor/acceptor is the Asp-151. Substrate is bound at residue Arg-152. Asn-200 and Asn-234 each carry an N-linked (GlcNAc...) asparagine; by host glycan. Position 276–277 (276–277 (EE)) interacts with substrate. Arg-292 contributes to the substrate binding site. Positions 293, 297, and 324 each coordinate Ca(2+). The tract at residues 326–350 (PRNNDRSSNSNCRNPNNDKGNHGVK) is disordered. The span at 331–343 (RSSNSNCRNPNND) shows a compositional bias: low complexity. Substrate is bound at residue Arg-371. An N-linked (GlcNAc...) asparagine; by host glycan is attached at Asn-402. The active-site Nucleophile is Tyr-406.

Belongs to the glycosyl hydrolase 34 family. As to quaternary structure, homotetramer. It depends on Ca(2+) as a cofactor. Post-translationally, N-glycosylated.

It localises to the virion membrane. Its subcellular location is the host apical cell membrane. The catalysed reaction is Hydrolysis of alpha-(2-&gt;3)-, alpha-(2-&gt;6)-, alpha-(2-&gt;8)- glycosidic linkages of terminal sialic acid residues in oligosaccharides, glycoproteins, glycolipids, colominic acid and synthetic substrates.. Its activity is regulated as follows. Inhibited by the neuraminidase inhibitors zanamivir (Relenza) and oseltamivir (Tamiflu). These drugs interfere with the release of progeny virus from infected cells and are effective against all influenza strains. Resistance to neuraminidase inhibitors is quite rare. Catalyzes the removal of terminal sialic acid residues from viral and cellular glycoconjugates. Cleaves off the terminal sialic acids on the glycosylated HA during virus budding to facilitate virus release. Additionally helps virus spread through the circulation by further removing sialic acids from the cell surface. These cleavages prevent self-aggregation and ensure the efficient spread of the progeny virus from cell to cell. Otherwise, infection would be limited to one round of replication. Described as a receptor-destroying enzyme because it cleaves a terminal sialic acid from the cellular receptors. May facilitate viral invasion of the upper airways by cleaving the sialic acid moieties on the mucin of the airway epithelial cells. Likely to plays a role in the budding process through its association with lipid rafts during intracellular transport. May additionally display a raft-association independent effect on budding. Plays a role in the determination of host range restriction on replication and virulence. Sialidase activity in late endosome/lysosome traffic seems to enhance virus replication. This chain is Neuraminidase, found in Aves (whales).